Consider the following 406-residue polypeptide: Probable peptidoglycan glycosyltransferase FtsW (406 aa).

Helical transmembrane passes span 22 to 42 (LWFVMSLIAILALGIVMVASA), 56 to 76 (FFMGRQILYLILGVSFGFMML), 86 to 106 (WGILLMLLSLVLLVLVLVPGI), 116 to 136 (WINLIVFNLQASEVAKVCMVV), 153 to 173 (LIGFALPLFLTSLFLIFLLME), 186 to 206 (VIALLFIGGAPVYQFIAIVIM), 280 to 300 (IWVEEMGLLGGVVLLSLFALM), 318 to 338 (FAGYMCFGFAILILAQVIINV), and 352 to 372 (LPLISYGGSSLIITLGSLFVV). Residues 383–397 (SKGGESEERKRKSDE) show a composition bias toward basic and acidic residues. The segment at 383–406 (SKGGESEERKRKSDESIDDGEALA) is disordered.

It belongs to the SEDS family. FtsW subfamily.

Its subcellular location is the cell inner membrane. The catalysed reaction is [GlcNAc-(1-&gt;4)-Mur2Ac(oyl-L-Ala-gamma-D-Glu-L-Lys-D-Ala-D-Ala)](n)-di-trans,octa-cis-undecaprenyl diphosphate + beta-D-GlcNAc-(1-&gt;4)-Mur2Ac(oyl-L-Ala-gamma-D-Glu-L-Lys-D-Ala-D-Ala)-di-trans,octa-cis-undecaprenyl diphosphate = [GlcNAc-(1-&gt;4)-Mur2Ac(oyl-L-Ala-gamma-D-Glu-L-Lys-D-Ala-D-Ala)](n+1)-di-trans,octa-cis-undecaprenyl diphosphate + di-trans,octa-cis-undecaprenyl diphosphate + H(+). It functions in the pathway cell wall biogenesis; peptidoglycan biosynthesis. Functionally, peptidoglycan polymerase that is essential for cell division. In Marinomonas mediterranea (strain ATCC 700492 / JCM 21426 / NBRC 103028 / MMB-1), this protein is Probable peptidoglycan glycosyltransferase FtsW.